We begin with the raw amino-acid sequence, 339 residues long: MNRANDTSSNLKLISLVVLIVQTTALVLTLRYSQTQKSEGPRYLSSTAVVCAEIIKLITCFFVIYRNNGYRFSGMLNELNREIFASPQTRADSLKVAVPAIMYVIQNNLLFFALKKLDAATYQVTYQLKILTTAIFSVTMLGKSLHRYNWMALILLTAGVALVQYPSGDSTTSKSTAAEHDASDNILGLGAVLAACFSSGFAGVYFEKILKTSKVSLWIRNIQLAFFSVFGALLVCWLYDWQAISDDGFLRGYNGVIWIVVLLQAYGGLVIALVVKYADNILKGFAVSLSIILSSFTSWLVLGDLTITTTFAIGATVVIFATFLYGHEPKSTPAEAHNA.

The next 8 membrane-spanning stretches (helical) occupy residues 44-64 (LSST…FFVI), 94-114 (LKVA…FFAL), 148-168 (YNWM…YPSG), 186-206 (ILGL…GVYF), 224-244 (LAFF…WQAI), 255-275 (GVIW…ALVV), 281-301 (ILKG…SWLV), and 305-325 (LTIT…TFLY).

It belongs to the nucleotide-sugar transporter family. SLC35A subfamily. Widely expressed, including in pharynx and pharyngeal gland cells, seam cells, spermatheca, stomatointestinal muscle, vulva, and body wall muscle.

The protein localises to the golgi apparatus membrane. Its function is as follows. Uridine diphosphate-N-acetylglucosamine (UDP-GlcNAc) transporter in the Golgi apparatus. UDP-N-acetylgalactosamine (UDP-GalNAc) transporter in the Golgi apparatus. Apparently transports UDP-GlcNAc and UDP-GalNAc simultaneously, and independently, by an unknown mechanism. Functions redundantly with nucleotide sugar transporter srf-3. May be involved in gonadal development. This is UDP-N-acetylglucosamine/UDP-N-acetylgalactosamine transporter nstp-4 from Caenorhabditis elegans.